A 177-amino-acid chain; its full sequence is Putative pre-16S rRNA nuclease (177 aa).

It belongs to the YqgF nuclease family.

The protein resides in the cytoplasm. Functionally, could be a nuclease involved in processing of the 5'-end of pre-16S rRNA. The chain is Putative pre-16S rRNA nuclease from Psychrobacter sp. (strain PRwf-1).